A 384-amino-acid polypeptide reads, in one-letter code: S-adenosylmethionine synthase (384 aa).

H15 lines the ATP pocket. D17 provides a ligand contact to Mg(2+). Residue E43 participates in K(+) binding. L-methionine is bound by residues E56 and Q99. Residues Q99 to R109 are flexible loop. Residues D164–K166, R230–F231, D239, R245–K246, A262, and K266 each bind ATP. D239 lines the L-methionine pocket. K270 lines the L-methionine pocket.

It belongs to the AdoMet synthase family. As to quaternary structure, homotetramer; dimer of dimers. Requires Mg(2+) as cofactor. The cofactor is K(+).

The protein resides in the cytoplasm. It carries out the reaction L-methionine + ATP + H2O = S-adenosyl-L-methionine + phosphate + diphosphate. It functions in the pathway amino-acid biosynthesis; S-adenosyl-L-methionine biosynthesis; S-adenosyl-L-methionine from L-methionine: step 1/1. Catalyzes the formation of S-adenosylmethionine (AdoMet) from methionine and ATP. The overall synthetic reaction is composed of two sequential steps, AdoMet formation and the subsequent tripolyphosphate hydrolysis which occurs prior to release of AdoMet from the enzyme. This is S-adenosylmethionine synthase from Salmonella gallinarum (strain 287/91 / NCTC 13346).